A 368-amino-acid polypeptide reads, in one-letter code: MPPIKTAVLGTGVSAFVFHFPFLEALPSKFEIYACLERRATVTQSKARSAYPNILVYTNLDELLADVNIELVVVSLPPNVHSEIVKKALNAGKHVVCEKPFTPTYEEAKELYELAESKSLLLAIYQNRRWDGDFLTAKKIIESGRLGQVVEFESHFDRYRLGRKSGSWKDEPRPGNGMVYGIGSHLIDQAVSLFGTPYSVTAKLEAQRQIPPLEVEDYFRIILHYPAKGNKLPINVILSSTNVSCGCEMRFCIKGTRGSFMKFGFDPQESQLHSGMKPNDHGFGTDRFELYGNLWTVPLDADVKALPEPTKITVPTVQGNYRDFYDAVFEEILKKANEFPIKSDQVLAVEKIMEAAYKSSESSSSIQL.

Belongs to the Gfo/Idh/MocA family.

This is an uncharacterized protein from Schizosaccharomyces pombe (strain 972 / ATCC 24843) (Fission yeast).